We begin with the raw amino-acid sequence, 637 residues long: 1-deoxy-D-xylulose-5-phosphate synthase (637 aa).

Thiamine diphosphate is bound by residues His76 and 117 to 119 (GHS). Residue Asp148 participates in Mg(2+) binding. Thiamine diphosphate is bound by residues 149 to 150 (GA), Asn177, Tyr294, and Glu381. Asn177 provides a ligand contact to Mg(2+).

This sequence belongs to the transketolase family. DXPS subfamily. Homodimer. Mg(2+) serves as cofactor. Thiamine diphosphate is required as a cofactor.

It carries out the reaction D-glyceraldehyde 3-phosphate + pyruvate + H(+) = 1-deoxy-D-xylulose 5-phosphate + CO2. The protein operates within metabolic intermediate biosynthesis; 1-deoxy-D-xylulose 5-phosphate biosynthesis; 1-deoxy-D-xylulose 5-phosphate from D-glyceraldehyde 3-phosphate and pyruvate: step 1/1. Functionally, catalyzes the acyloin condensation reaction between C atoms 2 and 3 of pyruvate and glyceraldehyde 3-phosphate to yield 1-deoxy-D-xylulose-5-phosphate (DXP). The polypeptide is 1-deoxy-D-xylulose-5-phosphate synthase (Neisseria gonorrhoeae (strain ATCC 700825 / FA 1090)).